Consider the following 350-residue polypeptide: Glyceraldehyde-3-phosphate dehydrogenase (350 aa).

Residues 10–11 (RI), D36, R82, and S125 contribute to the NAD(+) site. D-glyceraldehyde 3-phosphate-binding positions include 161–163 (SCT), T193, 222–223 (TG), and R245. C162 serves as the catalytic Nucleophile. An NAD(+)-binding site is contributed by N331.

It belongs to the glyceraldehyde-3-phosphate dehydrogenase family. In terms of assembly, homotetramer.

The protein resides in the cytoplasm. It catalyses the reaction D-glyceraldehyde 3-phosphate + phosphate + NAD(+) = (2R)-3-phospho-glyceroyl phosphate + NADH + H(+). It participates in carbohydrate degradation; glycolysis; pyruvate from D-glyceraldehyde 3-phosphate: step 1/5. Its function is as follows. Catalyzes the oxidative phosphorylation of glyceraldehyde 3-phosphate (G3P) to 1,3-bisphosphoglycerate (BPG) using the cofactor NAD. The first reaction step involves the formation of a hemiacetal intermediate between G3P and a cysteine residue, and this hemiacetal intermediate is then oxidized to a thioester, with concomitant reduction of NAD to NADH. The reduced NADH is then exchanged with the second NAD, and the thioester is attacked by a nucleophilic inorganic phosphate to produce BPG. This Treponema pallidum (strain Nichols) protein is Glyceraldehyde-3-phosphate dehydrogenase (gap).